A 359-amino-acid polypeptide reads, in one-letter code: Peptide chain release factor 1 (359 aa).

Q235 is subject to N5-methylglutamine. A disordered region spans residues 283 to 309 (QKAESERSQARRSQVGSGDRSERIRTY).

The protein belongs to the prokaryotic/mitochondrial release factor family. Methylated by PrmC. Methylation increases the termination efficiency of RF1.

It localises to the cytoplasm. Its function is as follows. Peptide chain release factor 1 directs the termination of translation in response to the peptide chain termination codons UAG and UAA. The sequence is that of Peptide chain release factor 1 from Brucella suis (strain ATCC 23445 / NCTC 10510).